The primary structure comprises 154 residues: Lipoprotein signal peptidase (154 aa).

Transmembrane regions (helical) follow at residues 55-75 and 85-105; these read GQFW…VIYI and AGVG…DRVF. Residues D111 and D129 contribute to the active site. A helical transmembrane segment spans residues 127 to 147; it reads VADSALTVGVILLFVHMFFFA.

Belongs to the peptidase A8 family.

Its subcellular location is the cell membrane. The enzyme catalyses Release of signal peptides from bacterial membrane prolipoproteins. Hydrolyzes -Xaa-Yaa-Zaa-|-(S,diacylglyceryl)Cys-, in which Xaa is hydrophobic (preferably Leu), and Yaa (Ala or Ser) and Zaa (Gly or Ala) have small, neutral side chains.. It participates in protein modification; lipoprotein biosynthesis (signal peptide cleavage). Functionally, this protein specifically catalyzes the removal of signal peptides from prolipoproteins. In Geobacillus kaustophilus (strain HTA426), this protein is Lipoprotein signal peptidase.